The chain runs to 122 residues: MLKYVVTDIGKMCLYIWPYRVWSWRRLFIFRVLNVVSIAILFETPHRLALVPNVCLYTHMAIPLSTCLFCLCLCICIKYDITQTQANNQRNLSLLFSVFHLVFSTIALSIYCIYQILILVKH.

3 consecutive transmembrane segments (helical) span residues 21–40 (VWSW…SIAI), 57–77 (YTHM…CICI), and 94–114 (LLFS…YCIY).

The protein resides in the membrane. This is an uncharacterized protein from Saccharomyces cerevisiae (strain ATCC 204508 / S288c) (Baker's yeast).